A 425-amino-acid polypeptide reads, in one-letter code: E3 ubiquitin-protein ligase TRIM31 (425 aa).

The RING-type zinc-finger motif lies at 16-57 (CPICLDILQKPVTIDCGHNFCLKCITQIGETSCGFFKCPLCK). The B box-type zinc finger occupies 90–131 (RKEATCPRHQEMFHYFCEDDGKFLCFVCRESKDHKSHNVSLI). The Zn(2+) site is built by C95, H98, C117, and H123. Coiled coils occupy residues 126-162 (HNVS…VKAQ) and 270-307 (LELE…DENR). The tract at residues 328–360 (HKMNKTSEPGSSSAGGRTTSGPPNHHSSAPSHS) is disordered. The segment covering 336 to 360 (PGSSSAGGRTTSGPPNHHSSAPSHS) has biased composition (low complexity).

Belongs to the TRIM/RBCC family. In terms of assembly, may form oligomers. Interacts with isoform p52shc of SHC1. Auto-ubiquitinated (in vitro). Up-regulated in gastric adenocarcinomas.

The protein localises to the cytoplasm. The protein resides in the mitochondrion. It carries out the reaction S-ubiquitinyl-[E2 ubiquitin-conjugating enzyme]-L-cysteine + [acceptor protein]-L-lysine = [E2 ubiquitin-conjugating enzyme]-L-cysteine + N(6)-ubiquitinyl-[acceptor protein]-L-lysine.. It functions in the pathway protein modification; protein ubiquitination. Its function is as follows. E3 ubiquitin-protein ligase that acts as a regulator of antiviral immune response and inflammation by mediating ubiquitination of substrates. Acts as a regulator of innate immune defense against viruses by mediating 'Lys-63'-linked ubiquitination of MAVS, promoting MAVS polymerization and formation of three-stranded helical filaments on mitochondria. Acts as a negative regulator of the NLRP3 inflammasome by catalyzing 'Lys-48'-linked ubiquitination of NLRP3, leading to its degradation. Regulator of Src-induced anchorage independent cell growth. This chain is E3 ubiquitin-protein ligase TRIM31, found in Homo sapiens (Human).